A 713-amino-acid chain; its full sequence is Cyclomaltodextrin glucanotransferase (713 aa).

The first 27 residues, 1–27, serve as a signal peptide directing secretion; the sequence is MKKQVKWLTSVSMSVGIALGAALPVWA. Residues 28–165 form an A1 region; that stretch reads SPDTSVNNKL…NIKVVMDFAP (138 aa). The Ca(2+) site is built by Asp-54, Asn-56, Asn-59, Asn-60, Gly-78, and Asp-80. Position 127 to 128 (127 to 128) interacts with substrate; the sequence is YW. Residue Asn-166 coordinates Ca(2+). A b region spans residues 166-229; it reads NHTNPASSTD…NLYDLADINQ (64 aa). His-167 is a substrate binding site. Residue Ile-217 participates in Ca(2+) binding. A substrate-binding site is contributed by 220–223; it reads NLYD. Asp-226 is a binding site for Ca(2+). The A2 stretch occupies residues 230-434; sequence NNNTIDSYLK…LRKSNPALAY (205 aa). Residue Arg-254 coordinates substrate. Asp-256 acts as the Nucleophile in catalysis. 259–260 is a binding site for substrate; it reads KH. His-260 is a Ca(2+) binding site. Glu-285 serves as the catalytic Proton donor. Positions 355, 399, and 403 each coordinate substrate. The segment at 435-522 is c; it reads GSTTQRWVNS…GTAVWQYTTT (88 aa). The tract at residues 523-609 is d; that stretch reads ESSPIIGNVG…SAAFNNFNVL (87 aa). The region spanning 526-606 is the IPT/TIG domain; that stretch reads PIIGNVGPTM…GTTSAAFNNF (81 aa). The CBM20 domain maps to 608–713; sequence VLTADQVTVR…VATVTVDWQN (106 aa). The e stretch occupies residues 610-713; sequence TADQVTVRFK…VATVTVDWQN (104 aa).

It belongs to the glycosyl hydrolase 13 family. As to quaternary structure, monomer. Ca(2+) serves as cofactor.

The protein localises to the secreted. It catalyses the reaction Cyclizes part of a (1-&gt;4)-alpha-D-glucan chain by formation of a (1-&gt;4)-alpha-D-glucosidic bond.. The chain is Cyclomaltodextrin glucanotransferase from Paenibacillus macerans (Bacillus macerans).